Reading from the N-terminus, the 174-residue chain is RNA pyrophosphohydrolase (174 aa).

Residues 6–149 (GFRANVGIII…KRDVYRKVMK (144 aa)) form the Nudix hydrolase domain. Residues 38–59 (GGVDEGESAEQAMYRELYEEVG) carry the Nudix box motif.

This sequence belongs to the Nudix hydrolase family. RppH subfamily. The cofactor is a divalent metal cation.

Its function is as follows. Accelerates the degradation of transcripts by removing pyrophosphate from the 5'-end of triphosphorylated RNA, leading to a more labile monophosphorylated state that can stimulate subsequent ribonuclease cleavage. This chain is RNA pyrophosphohydrolase, found in Shewanella loihica (strain ATCC BAA-1088 / PV-4).